The primary structure comprises 185 residues: Ribosome-recycling factor (185 aa).

Belongs to the RRF family.

The protein localises to the cytoplasm. Its function is as follows. Responsible for the release of ribosomes from messenger RNA at the termination of protein biosynthesis. May increase the efficiency of translation by recycling ribosomes from one round of translation to another. The polypeptide is Ribosome-recycling factor (Acidothermus cellulolyticus (strain ATCC 43068 / DSM 8971 / 11B)).